Consider the following 304-residue polypeptide: Developmental pluripotency-associated protein 4 (304 aa).

The span at 1-11 (MLRGSASSTSM) shows a compositional bias: polar residues. Disordered regions lie at residues 1 to 84 (MLRG…IPPL) and 147 to 176 (KKLKVEKGETSLQSSETHPPEVALPPVGEP). Positions 12–29 (EKAKGKEWTSTEKSREED) are enriched in basic and acidic residues. T215 is modified (phosphothreonine). Phosphoserine occurs at positions 221 and 226.

As to quaternary structure, interacts with DPPA2. Interacts with PCGF1.

Its subcellular location is the nucleus. May be involved in the maintenance of active epigenetic status of target genes. May inhibit differentiation of embryonic cells into a primitive ectoderm lineage. The chain is Developmental pluripotency-associated protein 4 (DPPA4) from Homo sapiens (Human).